Here is a 607-residue protein sequence, read N- to C-terminus: UvrABC system protein C (607 aa).

The GIY-YIG domain occupies 11–89 (CKPGVYRFED…IKEFAPPCNV (79 aa)). In terms of domain architecture, UVR spans 201–236 (SSLLESLKKKMLKASKNKEYEEAAILRDKIQAAQTV).

Belongs to the UvrC family. As to quaternary structure, interacts with UvrB in an incision complex.

It localises to the cytoplasm. In terms of biological role, the UvrABC repair system catalyzes the recognition and processing of DNA lesions. UvrC both incises the 5' and 3' sides of the lesion. The N-terminal half is responsible for the 3' incision and the C-terminal half is responsible for the 5' incision. This Tropheryma whipplei (strain TW08/27) (Whipple's bacillus) protein is UvrABC system protein C.